A 309-amino-acid polypeptide reads, in one-letter code: Interferon-inducible double-stranded RNA-dependent protein kinase activator A homolog A (309 aa).

Residues 1–22 are disordered; the sequence is MSQERFPAAPKMSSEKPTSLDA. DRBM domains follow at residues 31-98, 123-191, and 236-304; these read TPIQ…ILRG, NPVG…KFKT, and DYVK…YLKI.

It belongs to the PRKRA family. As to quaternary structure, homodimer. Interacts with dicer1 and eif2ak2/pkr. Also able to interact with dsRNA.

It is found in the cytoplasm. The protein localises to the perinuclear region. The protein resides in the nucleus. Activates eif2ak2/pkr in the absence of double-stranded RNA (dsRNA), leading to phosphorylation of eif2s1/efi2-alpha and inhibition of translation and induction of apoptosis. Required for siRNA production by dicer1 and for subsequent siRNA-mediated post-transcriptional gene silencing. Does not seem to be required for processing of pre-miRNA to miRNA by dicer1. This chain is Interferon-inducible double-stranded RNA-dependent protein kinase activator A homolog A (prkra-a), found in Xenopus laevis (African clawed frog).